The primary structure comprises 333 residues: Ferrochelatase (333 aa).

Fe cation-binding residues include His-202 and Glu-284.

It belongs to the ferrochelatase family.

Its subcellular location is the cytoplasm. It carries out the reaction heme b + 2 H(+) = protoporphyrin IX + Fe(2+). The protein operates within porphyrin-containing compound metabolism; protoheme biosynthesis; protoheme from protoporphyrin-IX: step 1/1. Its function is as follows. Catalyzes the ferrous insertion into protoporphyrin IX. In Francisella tularensis subsp. holarctica (strain LVS), this protein is Ferrochelatase.